The primary structure comprises 109 residues: Thiosulfate sulfurtransferase GlpE (109 aa).

The Rhodanese domain maps to 17-105 (AQGQALLLDI…WQRAYPEEVA (89 aa)). The active-site Cysteine persulfide intermediate is C65.

This sequence belongs to the GlpE family.

It localises to the cytoplasm. The catalysed reaction is thiosulfate + hydrogen cyanide = thiocyanate + sulfite + 2 H(+). It catalyses the reaction thiosulfate + [thioredoxin]-dithiol = [thioredoxin]-disulfide + hydrogen sulfide + sulfite + 2 H(+). Functionally, transferase that catalyzes the transfer of sulfur from thiosulfate to thiophilic acceptors such as cyanide or dithiols. May function in a CysM-independent thiosulfate assimilation pathway by catalyzing the conversion of thiosulfate to sulfite, which can then be used for L-cysteine biosynthesis. The chain is Thiosulfate sulfurtransferase GlpE from Edwardsiella ictaluri (strain 93-146).